A 369-amino-acid polypeptide reads, in one-letter code: Peptide chain release factor 2 (369 aa).

An N5-methylglutamine modification is found at Gln251.

Belongs to the prokaryotic/mitochondrial release factor family. Post-translationally, methylated by PrmC. Methylation increases the termination efficiency of RF2.

Its subcellular location is the cytoplasm. Its function is as follows. Peptide chain release factor 2 directs the termination of translation in response to the peptide chain termination codons UGA and UAA. In Chlamydia trachomatis serovar A (strain ATCC VR-571B / DSM 19440 / HAR-13), this protein is Peptide chain release factor 2.